We begin with the raw amino-acid sequence, 106 residues long: Large ribosomal subunit protein uL24 (106 aa).

Belongs to the universal ribosomal protein uL24 family. As to quaternary structure, part of the 50S ribosomal subunit.

Functionally, one of two assembly initiator proteins, it binds directly to the 5'-end of the 23S rRNA, where it nucleates assembly of the 50S subunit. In terms of biological role, one of the proteins that surrounds the polypeptide exit tunnel on the outside of the subunit. The polypeptide is Large ribosomal subunit protein uL24 (Bordetella bronchiseptica (strain ATCC BAA-588 / NCTC 13252 / RB50) (Alcaligenes bronchisepticus)).